The primary structure comprises 291 residues: Pyridoxal 5'-phosphate synthase subunit PdxS (291 aa).

D23 is a binding site for D-ribose 5-phosphate. K80 (schiff-base intermediate with D-ribose 5-phosphate) is an active-site residue. Residue G152 coordinates D-ribose 5-phosphate. R164 serves as a coordination point for D-glyceraldehyde 3-phosphate. D-ribose 5-phosphate contacts are provided by residues G213 and 234-235; that span reads GS.

Belongs to the PdxS/SNZ family. As to quaternary structure, in the presence of PdxT, forms a dodecamer of heterodimers.

It catalyses the reaction aldehydo-D-ribose 5-phosphate + D-glyceraldehyde 3-phosphate + L-glutamine = pyridoxal 5'-phosphate + L-glutamate + phosphate + 3 H2O + H(+). It functions in the pathway cofactor biosynthesis; pyridoxal 5'-phosphate biosynthesis. Catalyzes the formation of pyridoxal 5'-phosphate from ribose 5-phosphate (RBP), glyceraldehyde 3-phosphate (G3P) and ammonia. The ammonia is provided by the PdxT subunit. Can also use ribulose 5-phosphate and dihydroxyacetone phosphate as substrates, resulting from enzyme-catalyzed isomerization of RBP and G3P, respectively. The sequence is that of Pyridoxal 5'-phosphate synthase subunit PdxS from Desulfitobacterium hafniense (strain DSM 10664 / DCB-2).